We begin with the raw amino-acid sequence, 349 residues long: Probable arabinogalactan endo-beta-1,4-galactanase A (349 aa).

The first 15 residues, 1–15, serve as a signal peptide directing secretion; it reads MLLSFLPLLPLATAA. N126 carries N-linked (GlcNAc...) asparagine glycosylation. The active-site Proton donor is E150. The active-site Nucleophile is E261.

This sequence belongs to the glycosyl hydrolase 53 family.

The protein resides in the secreted. The enzyme catalyses The enzyme specifically hydrolyzes (1-&gt;4)-beta-D-galactosidic linkages in type I arabinogalactans.. In terms of biological role, endogalactanase involved in the degradation of plant cell wall polysaccharides, and more particularly of hairy regions of pectin. This is Probable arabinogalactan endo-beta-1,4-galactanase A (galA) from Aspergillus terreus (strain NIH 2624 / FGSC A1156).